We begin with the raw amino-acid sequence, 671 residues long: MDKAQRIRRYQQLCDELHRHSRLYYTYDRPEITDAEYDRLFRELLELEKAYPELVTAASPSLRVGASPLSQFTPVPHSRPMLSLENALTEDELYDFDARIRKLLASDAPVRYVCELKMDGVAVELVYRDGILSVGSTRGDGTTGEGITENLRTIPSIPLVLSGEAPALLEVRGEVYIDLDDFQKLNHEREEEGLQVFANPRNAAAGSLRQLDSAVTAKRPLKIFCYGIGQLSGEHPASHHSLLKCMHRWGLRVNLEHSRTLEGIEQVTDYFRQLQQRRDELPYEIDGMVVKVDDLALQRELGEKTRTPRWAIACKFPPRQAVTVVEDIVLQVGRTGAITPVAQLKPVEVSGVTVSRASLHNWDEIARLDVLIGDTVVVERAGDVIPDVVKVLTEHRNGQERSVPLPQSCPACGGPVVKLEGEVVPRCQEMSCPARLRESIKHFVARRAMDIDGLGERTIEQLLKRELIKSVADLYHLTKEDLLLCERLADKSAEKLLTAIAASKTRPLGRFLFALGIRHVGEHLASLLARQFGSLDALSHATREELLAIHEIGPQVADSVTDFFAKSRNREILAALQRAGVAPQAEEKRSGGPLTGKSFVFTGSLTRFSRKQAQEMVERLGGRASGSVSKKTDCVVAGEAAGSKLEKARQLNIQILSEEEFLQMIDTLEEA.

NAD(+) contacts are provided by residues 34-38 (DAEYD), 83-84 (SL), and Glu115. Residue Lys117 is the N6-AMP-lysine intermediate of the active site. NAD(+) contacts are provided by Arg138, Glu174, Lys291, and Lys315. The Zn(2+) site is built by Cys409, Cys412, Cys427, and Cys432. A BRCT domain is found at 589-671 (RSGGPLTGKS…LQMIDTLEEA (83 aa)).

The protein belongs to the NAD-dependent DNA ligase family. LigA subfamily. Mg(2+) serves as cofactor. It depends on Mn(2+) as a cofactor.

The catalysed reaction is NAD(+) + (deoxyribonucleotide)n-3'-hydroxyl + 5'-phospho-(deoxyribonucleotide)m = (deoxyribonucleotide)n+m + AMP + beta-nicotinamide D-nucleotide.. In terms of biological role, DNA ligase that catalyzes the formation of phosphodiester linkages between 5'-phosphoryl and 3'-hydroxyl groups in double-stranded DNA using NAD as a coenzyme and as the energy source for the reaction. It is essential for DNA replication and repair of damaged DNA. The chain is DNA ligase from Syntrophotalea carbinolica (strain DSM 2380 / NBRC 103641 / GraBd1) (Pelobacter carbinolicus).